Consider the following 1431-residue polypeptide: Probable serine/threonine-protein kinase irlA (1431 aa).

The span at Met1–Thr10 shows a compositional bias: basic residues. Disordered regions lie at residues Met1 to Glu81 and Lys736 to Lys879. Positions Asn25–Ile43 are enriched in acidic residues. A compositionally biased stretch (low complexity) spans Asn46 to Asn67. 2 coiled-coil regions span residues Asn57–Glu97 and Lys715–Asn759. The segment covering Gly68–Glu81 has biased composition (basic and acidic residues). The span at Glu738–Lys749 shows a compositional bias: basic residues. Low complexity predominate over residues Ser750–Lys776. Residues Leu777–Ile791 are compositionally biased toward polar residues. Positions Thr792–Thr812 are enriched in low complexity. The span at Thr821–Ser838 shows a compositional bias: polar residues. Positions Asn854–Asn878 are enriched in low complexity. Residues Asn860 to Leu971 adopt a coiled-coil conformation. The region spanning Arg987–Phe1261 is the Protein kinase domain. Residues Ile993 to Leu1001 and Lys1016 contribute to the ATP site. The active-site Proton acceptor is the Asp1130. The 168-residue stretch at Thr1264–Phe1431 folds into the KEN domain.

It belongs to the protein kinase superfamily. Ser/Thr protein kinase family.

The catalysed reaction is L-seryl-[protein] + ATP = O-phospho-L-seryl-[protein] + ADP + H(+). It carries out the reaction L-threonyl-[protein] + ATP = O-phospho-L-threonyl-[protein] + ADP + H(+). The chain is Probable serine/threonine-protein kinase irlA (irlA) from Dictyostelium discoideum (Social amoeba).